A 374-amino-acid chain; its full sequence is Dihydroorotate dehydrogenase (quinone) (374 aa).

Residues 78–82 (AGFDK) and Thr-102 contribute to the FMN site. Substrate is bound at residue Lys-82. Residue 127 to 131 (NRMGF) participates in substrate binding. Positions 159 and 192 each coordinate FMN. Asn-192 serves as a coordination point for substrate. Ser-195 serves as the catalytic Nucleophile. Asn-197 provides a ligand contact to substrate. FMN contacts are provided by Lys-230 and Thr-258. 259–260 (NT) provides a ligand contact to substrate. Residues Gly-287, Gly-316, and 337–338 (YT) each bind FMN.

It belongs to the dihydroorotate dehydrogenase family. Type 2 subfamily. Monomer. It depends on FMN as a cofactor.

Its subcellular location is the cell membrane. It carries out the reaction (S)-dihydroorotate + a quinone = orotate + a quinol. It participates in pyrimidine metabolism; UMP biosynthesis via de novo pathway; orotate from (S)-dihydroorotate (quinone route): step 1/1. Its function is as follows. Catalyzes the conversion of dihydroorotate to orotate with quinone as electron acceptor. The chain is Dihydroorotate dehydrogenase (quinone) from Acaryochloris marina (strain MBIC 11017).